The primary structure comprises 109 residues: Flagellar hook-basal body complex protein FliE (109 aa).

Residues 1–38 (MQAIHNDKSLLSPFSELNTDNRTQREESGSTFKEQKGG) form a disordered region. The segment covering 22 to 38 (RTQREESGSTFKEQKGG) has biased composition (basic and acidic residues).

This sequence belongs to the FliE family.

Its subcellular location is the bacterial flagellum basal body. The polypeptide is Flagellar hook-basal body complex protein FliE (Helicobacter acinonychis (strain Sheeba)).